A 428-amino-acid chain; its full sequence is MNQSEVLFAQARTVISGGVNSPVRAFNGVGGNPIFFTRGKGAYLFDVDGNKYIDYVASWGPMILGHANQEVINAIKTNLENGLSFGAPTHIETMLAEKVCELIPSIELVRMVSSGTEATMSAIRLARGYTGRDKIIKFEGCYHGHSDALLVKAGSAALTLGVPTSPGVPKDFAKHTLTLEYNNINQVYEILKEVGTEVACIIVEPVAGNMNCILPIDGFLQGLRKLCDEYGIILIFDEVMTGFRVALGGAQEFYNVEPDLTTLGKIIGGGLPVGIFGGKCEIMKCIAPLGPIYQAGTLSGNPISMSAGLAMLNVLSKDKNFYTTLNIKVQKLTKGFLAKAKENNIGMTANVVGGMFGLFFTDAKSVTNFKEVSQCNVELFKRFYHLMLEEGVYMTPSIYETDFISSAHSDMDIQNTIDAAGRVFAKLV.

Lys-265 is subject to N6-(pyridoxal phosphate)lysine.

Belongs to the class-III pyridoxal-phosphate-dependent aminotransferase family. HemL subfamily. As to quaternary structure, homodimer. Requires pyridoxal 5'-phosphate as cofactor.

It localises to the cytoplasm. It carries out the reaction (S)-4-amino-5-oxopentanoate = 5-aminolevulinate. The protein operates within porphyrin-containing compound metabolism; protoporphyrin-IX biosynthesis; 5-aminolevulinate from L-glutamyl-tRNA(Glu): step 2/2. This is Glutamate-1-semialdehyde 2,1-aminomutase from Vesicomyosocius okutanii subsp. Calyptogena okutanii (strain HA).